The sequence spans 259 residues: Hydroxyethylthiazole kinase (259 aa).

A substrate-binding site is contributed by M37. ATP is bound by residues R113 and T158. G185 provides a ligand contact to substrate.

This sequence belongs to the Thz kinase family. Requires Mg(2+) as cofactor.

It catalyses the reaction 5-(2-hydroxyethyl)-4-methylthiazole + ATP = 4-methyl-5-(2-phosphooxyethyl)-thiazole + ADP + H(+). Its pathway is cofactor biosynthesis; thiamine diphosphate biosynthesis; 4-methyl-5-(2-phosphoethyl)-thiazole from 5-(2-hydroxyethyl)-4-methylthiazole: step 1/1. Catalyzes the phosphorylation of the hydroxyl group of 4-methyl-5-beta-hydroxyethylthiazole (THZ). This chain is Hydroxyethylthiazole kinase, found in Helicobacter pylori (strain ATCC 700392 / 26695) (Campylobacter pylori).